We begin with the raw amino-acid sequence, 630 residues long: Phosphomethylpyrimidine synthase (630 aa).

Substrate is bound by residues asparagine 227, methionine 256, tyrosine 285, histidine 321, 341–343, 382–385, and glutamate 421; these read SRG and DGLR. Histidine 425 contributes to the Zn(2+) binding site. Position 448 (tyrosine 448) interacts with substrate. Residue histidine 489 coordinates Zn(2+). Residues cysteine 569, cysteine 572, and cysteine 577 each contribute to the [4Fe-4S] cluster site.

This sequence belongs to the ThiC family. In terms of assembly, homodimer. Requires [4Fe-4S] cluster as cofactor.

The catalysed reaction is 5-amino-1-(5-phospho-beta-D-ribosyl)imidazole + S-adenosyl-L-methionine = 4-amino-2-methyl-5-(phosphooxymethyl)pyrimidine + CO + 5'-deoxyadenosine + formate + L-methionine + 3 H(+). The protein operates within cofactor biosynthesis; thiamine diphosphate biosynthesis. In terms of biological role, catalyzes the synthesis of the hydroxymethylpyrimidine phosphate (HMP-P) moiety of thiamine from aminoimidazole ribotide (AIR) in a radical S-adenosyl-L-methionine (SAM)-dependent reaction. This is Phosphomethylpyrimidine synthase from Hydrogenovibrio crunogenus (strain DSM 25203 / XCL-2) (Thiomicrospira crunogena).